The chain runs to 125 residues: Large ribosomal subunit protein uL18 (125 aa).

This sequence belongs to the universal ribosomal protein uL18 family. As to quaternary structure, part of the 50S ribosomal subunit; part of the 5S rRNA/L5/L18/L25 subcomplex. Contacts the 5S and 23S rRNAs.

Its function is as follows. This is one of the proteins that bind and probably mediate the attachment of the 5S RNA into the large ribosomal subunit, where it forms part of the central protuberance. In Anaplasma marginale (strain Florida), this protein is Large ribosomal subunit protein uL18.